Consider the following 1357-residue polypeptide: Regulator of V-ATPase in vacuolar membrane protein 1 (1357 aa).

WD repeat units follow at residues histidine 98–glutamine 134, lysine 142–alanine 182, proline 190–threonine 239, glycine 384–serine 423, glutamine 431–serine 470, isoleucine 595–glutamate 636, threonine 638–asparagine 679, and glutamine 898–tyrosine 939. Positions glycine 1243 to valine 1357 are disordered. 2 positions are modified to phosphoserine: serine 1244 and serine 1248. Residues serine 1272–serine 1288 are compositionally biased toward low complexity. Basic and acidic residues predominate over residues serine 1320–leucine 1332.

Component of the RAVE complex composed of RAV1, RAV2 and CBF3D/SKP1. Within the complex, it interacts directly with RAV2 and CBF3D. Interacts with the V-ATPase V1 subunits VMA1, VMA2 and VMA8.

Its subcellular location is the endomembrane system. In terms of biological role, component of the RAVE complex, which is required for stable assembly of the vacuolar ATPase complex V-ATPase under many conditions. Required for transport between the early endosome and the late endosome/prevacuolar compartment (PVC), suggesting that assembly of vacuolar ATPase at the early endosome is required for transport from the early endosome to the PVC. The protein is Regulator of V-ATPase in vacuolar membrane protein 1 (RAV1) of Saccharomyces cerevisiae (strain ATCC 204508 / S288c) (Baker's yeast).